Here is a 548-residue protein sequence, read N- to C-terminus: MAAKDVKFGNDARVKMLEGVNVLADAVKVTLGPKGRNVVLDKSFGAPTITKDGVSVAREIELEDKFQNMGAQMVKEVASKANDAAGDGTTTATVLAQAIVNEGLKAVAAGMNPMDLKRGIDKAVIAAVEQLKELSVECNDTKAIAQVGTISANSDSSVGNIIAEAMEKVGRDGVITVEEGQALQDELDVVEGMQFDRGYLSPYFINNQEAGSVELENPFILLIDKKVSNIRELLPALEAVAKASRPLLIIAEDVEGEALATLVVNNMRGIVKVAAVKAPGFGDRRKAMLQDIAILTGGIVISEEVGLELEKVALEDLGQAKRVAITKENTTIIDGMGEEAMIQGRVAQIRQQIEDATSDYDKEKLQERVAKLAGGVAVIKVGAATEVEMKEKKDRVEDALHATRAAVEEGVVAGGGVALIRAASKIVDLEGDNEEQNVGIRVALRAMEAPIRQITKNAGDEESVVANNVKAGEGSYGYNAATGEYGDMLEMGILDPTKVTRSALQFAASVAGLMITTEAMVTDLPQKDGAGMPDMGGMGGMGGMGGMM.

Residues 30-33 (TLGP), K51, 87-91 (DGTTT), G415, 479-481 (NAA), and D495 each bind ATP.

It belongs to the chaperonin (HSP60) family. Forms a cylinder of 14 subunits composed of two heptameric rings stacked back-to-back. Interacts with the co-chaperonin GroES.

The protein resides in the cytoplasm. The enzyme catalyses ATP + H2O + a folded polypeptide = ADP + phosphate + an unfolded polypeptide.. In terms of biological role, together with its co-chaperonin GroES, plays an essential role in assisting protein folding. The GroEL-GroES system forms a nano-cage that allows encapsulation of the non-native substrate proteins and provides a physical environment optimized to promote and accelerate protein folding. This is Chaperonin GroEL from Vibrio campbellii (strain ATCC BAA-1116).